The sequence spans 291 residues: Transmembrane protein 41B (291 aa).

Basic and acidic residues predominate over residues 1–11; it reads MAKGRVAERSQ. Positions 1-38 are disordered; that stretch reads MAKGRVAERSQTEMLHSTPAGDRAVGTQGSAAPGNKDH. Thr-18 is modified (phosphothreonine). Transmembrane regions (helical) follow at residues 52–72, 109–129, 147–169, 197–217, 225–245, and 262–282; these read TSLL…FLVY, FYVQ…TFAI, LALF…LSYL, LINY…FINI, PLKV…FVAI, and SWNS…PAIF. Positions 140-251 are VTT domain; required for its function in autophagy; the sequence is GFLYPFPLAL…FVAIKAGTTL (112 aa).

Belongs to the TMEM41 family. Interacts with VMP1. Interacts with COPA, COPB1, VDAC1 and ERLIN2. Interacts with ATG2A. Interacts with SURF4.

The protein resides in the endoplasmic reticulum membrane. It is found in the endomembrane system. It carries out the reaction a 1,2-diacyl-sn-glycero-3-phospho-L-serine(in) = a 1,2-diacyl-sn-glycero-3-phospho-L-serine(out). The catalysed reaction is cholesterol(in) = cholesterol(out). The enzyme catalyses a 1,2-diacyl-sn-glycero-3-phosphocholine(in) = a 1,2-diacyl-sn-glycero-3-phosphocholine(out). It catalyses the reaction a 1,2-diacyl-sn-glycero-3-phosphoethanolamine(in) = a 1,2-diacyl-sn-glycero-3-phosphoethanolamine(out). Functionally, phospholipid scramblase involved in lipid homeostasis and membrane dynamics processes. Has phospholipid scramblase activity toward cholesterol and phosphatidylserine, as well as phosphatidylethanolamine and phosphatidylcholine. Required for autophagosome formation: participates in early stages of autophagosome biogenesis at the endoplasmic reticulum (ER) membrane by reequilibrating the leaflets of the ER as lipids are extracted by ATG2 (ATG2A or ATG2B) to mediate autophagosome assembly. In addition to autophagy, involved in other processes in which phospholipid scramblase activity is required. Required for normal motor neuron development. The sequence is that of Transmembrane protein 41B from Rattus norvegicus (Rat).